The sequence spans 382 residues: Chorismate synthase (382 aa).

NADP(+)-binding residues include arginine 39 and arginine 45. Residues 127-129, 245-246, glycine 290, 305-309, and arginine 331 contribute to the FMN site; these read RAS, QA, and KPIPT.

The protein belongs to the chorismate synthase family. In terms of assembly, homotetramer. FMNH2 is required as a cofactor.

It catalyses the reaction 5-O-(1-carboxyvinyl)-3-phosphoshikimate = chorismate + phosphate. It functions in the pathway metabolic intermediate biosynthesis; chorismate biosynthesis; chorismate from D-erythrose 4-phosphate and phosphoenolpyruvate: step 7/7. Catalyzes the anti-1,4-elimination of the C-3 phosphate and the C-6 proR hydrogen from 5-enolpyruvylshikimate-3-phosphate (EPSP) to yield chorismate, which is the branch point compound that serves as the starting substrate for the three terminal pathways of aromatic amino acid biosynthesis. This reaction introduces a second double bond into the aromatic ring system. This is Chorismate synthase from Desulfitobacterium hafniense (strain Y51).